The chain runs to 235 residues: uncharacterized protein (235 aa).

The N-acetyltransferase domain occupies 82–221 (LAFKKFPPDP…DTGELIRESP (140 aa)).

Belongs to the acetyltransferase family.

It is found in the golgi apparatus membrane. It localises to the endoplasmic reticulum membrane. This is an uncharacterized protein from Schizosaccharomyces pombe (strain 972 / ATCC 24843) (Fission yeast).